Reading from the N-terminus, the 87-residue chain is Phosphoribosyl-ATP pyrophosphatase (87 aa).

This sequence belongs to the PRA-PH family.

The protein resides in the cytoplasm. It catalyses the reaction 1-(5-phospho-beta-D-ribosyl)-ATP + H2O = 1-(5-phospho-beta-D-ribosyl)-5'-AMP + diphosphate + H(+). The protein operates within amino-acid biosynthesis; L-histidine biosynthesis; L-histidine from 5-phospho-alpha-D-ribose 1-diphosphate: step 2/9. The chain is Phosphoribosyl-ATP pyrophosphatase from Pseudarthrobacter chlorophenolicus (strain ATCC 700700 / DSM 12829 / CIP 107037 / JCM 12360 / KCTC 9906 / NCIMB 13794 / A6) (Arthrobacter chlorophenolicus).